Here is a 332-residue protein sequence, read N- to C-terminus: Adenosine deaminase (332 aa).

2 residues coordinate Zn(2+): H12 and H14. 3 residues coordinate substrate: H14, D16, and G170. H197 lines the Zn(2+) pocket. E200 serves as the catalytic Proton donor. Position 278 (D278) interacts with Zn(2+). Position 279 (D279) interacts with substrate.

It belongs to the metallo-dependent hydrolases superfamily. Adenosine and AMP deaminases family. Adenosine deaminase subfamily. It depends on Zn(2+) as a cofactor.

It catalyses the reaction adenosine + H2O + H(+) = inosine + NH4(+). It carries out the reaction 2'-deoxyadenosine + H2O + H(+) = 2'-deoxyinosine + NH4(+). In terms of biological role, catalyzes the hydrolytic deamination of adenosine and 2-deoxyadenosine. The sequence is that of Adenosine deaminase from Serratia proteamaculans (strain 568).